The primary structure comprises 235 residues: Urease accessory protein UreF (235 aa).

This sequence belongs to the UreF family. UreD, UreF and UreG form a complex that acts as a GTP-hydrolysis-dependent molecular chaperone, activating the urease apoprotein by helping to assemble the nickel containing metallocenter of UreC. The UreE protein probably delivers the nickel.

Its subcellular location is the cytoplasm. Required for maturation of urease via the functional incorporation of the urease nickel metallocenter. The protein is Urease accessory protein UreF of Pseudoalteromonas translucida (strain TAC 125).